The following is a 395-amino-acid chain: NAD(P)H-quinone oxidoreductase subunit H, chloroplastic (395 aa).

It belongs to the complex I 49 kDa subunit family. As to quaternary structure, NDH is composed of at least 16 different subunits, 5 of which are encoded in the nucleus.

It is found in the plastid. The protein resides in the chloroplast thylakoid membrane. It catalyses the reaction a plastoquinone + NADH + (n+1) H(+)(in) = a plastoquinol + NAD(+) + n H(+)(out). It carries out the reaction a plastoquinone + NADPH + (n+1) H(+)(in) = a plastoquinol + NADP(+) + n H(+)(out). In terms of biological role, NDH shuttles electrons from NAD(P)H:plastoquinone, via FMN and iron-sulfur (Fe-S) centers, to quinones in the photosynthetic chain and possibly in a chloroplast respiratory chain. The immediate electron acceptor for the enzyme in this species is believed to be plastoquinone. Couples the redox reaction to proton translocation, and thus conserves the redox energy in a proton gradient. The protein is NAD(P)H-quinone oxidoreductase subunit H, chloroplastic of Staurastrum punctulatum (Green alga).